Here is a 679-residue protein sequence, read N- to C-terminus: Protein hook (679 aa).

In terms of domain architecture, Calponin-homology (CH) spans 5–123; the sequence is NGMYYSLLEW…RLLQLVLGCA (119 aa). Residues 140–627 adopt a coiled-coil conformation; the sequence is EEELQANIMR…SKTKMSTMEE (488 aa).

The protein belongs to the hook family. In terms of assembly, homodimer. Interacts with microtubules via its N-terminus.

Its subcellular location is the cytoplasm. It localises to the cytoskeleton. The protein localises to the endosome. It is found in the synapse. Its function is as follows. Involved in endocytic trafficking by stabilizing organelles of the endocytic pathway. Probably acts as a cytoskeletal linker protein required to tether endosome vesicles to the cytoskeleton. Involved in modulation of endocytosis at stages required for down-regulation of membrane proteins that control synapse size. Not involved in synaptic vesicle recycling. Required in R7 cells for boss endocytosis into multivesicular bodies (MVBs). Has a role in regulating adult longevity. This chain is Protein hook, found in Drosophila mojavensis (Fruit fly).